The primary structure comprises 210 residues: Thymidylate kinase (210 aa).

Residue 10–17 (GPEGAGKS) coordinates ATP.

The protein belongs to the thymidylate kinase family.

The catalysed reaction is dTMP + ATP = dTDP + ADP. Functionally, phosphorylation of dTMP to form dTDP in both de novo and salvage pathways of dTTP synthesis. This chain is Thymidylate kinase, found in Pseudomonas putida (strain GB-1).